Consider the following 224-residue polypeptide: MENRDIARLIDHTLLRPDATQEDIEKLCAEAVEYGFASVCTATCWTSFVREYLDAHNSPVKVCSVVGFPFGSALTDAKREETWDAVEYGADEIDMVINVGYLRSGMLDLFEKDIRTVVKVSGSAAVKVIIETCYLTDEQKVLAARTAKKCGAAFVKTSTGYGPSGARLEDVRLIREAVPDILIKASGGIRTYEQAKAFTEAGASRIGTSSGIAIVTGARGESSY.

Aspartate 94 functions as the Proton donor/acceptor in the catalytic mechanism. Residue lysine 156 is the Schiff-base intermediate with acetaldehyde of the active site. Lysine 184 acts as the Proton donor/acceptor in catalysis.

The protein belongs to the DeoC/FbaB aldolase family. DeoC type 1 subfamily.

The protein localises to the cytoplasm. It catalyses the reaction 2-deoxy-D-ribose 5-phosphate = D-glyceraldehyde 3-phosphate + acetaldehyde. The protein operates within carbohydrate degradation; 2-deoxy-D-ribose 1-phosphate degradation; D-glyceraldehyde 3-phosphate and acetaldehyde from 2-deoxy-alpha-D-ribose 1-phosphate: step 2/2. Catalyzes a reversible aldol reaction between acetaldehyde and D-glyceraldehyde 3-phosphate to generate 2-deoxy-D-ribose 5-phosphate. This chain is Deoxyribose-phosphate aldolase, found in Methanocella arvoryzae (strain DSM 22066 / NBRC 105507 / MRE50).